A 91-amino-acid chain; its full sequence is Elongation factor 1-beta (91 aa).

Belongs to the EF-1-beta/EF-1-delta family.

Functionally, promotes the exchange of GDP for GTP in EF-1-alpha/GDP, thus allowing the regeneration of EF-1-alpha/GTP that could then be used to form the ternary complex EF-1-alpha/GTP/AAtRNA. The polypeptide is Elongation factor 1-beta (Pyrococcus furiosus (strain ATCC 43587 / DSM 3638 / JCM 8422 / Vc1)).